The sequence spans 587 residues: Ankyrin repeat and SOCS box protein 14 (587 aa).

11 ANK repeats span residues 82 to 112 (IGWI…SLWE), 117 to 146 (NGET…NPNA), 150 to 179 (EGNS…DVNL), 183 to 212 (NERT…HPDP), 216 to 245 (YGFT…IFCL), 248 to 277 (DSSS…DANI), 281 to 310 (SGHL…LAAI), 313 to 342 (SGIS…DVNF), 355 to 384 (HRKS…LPNQ), 385 to 414 (DPVN…NVNY), and 416 to 449 (CRVN…DTER). The region spanning 521–576 (WSEIHFILTNPRSLKHLCRLKIRKCMGRLHLRCPVFMSFLPLPNRLKAYVLYKEYD) is the SOCS box domain.

Belongs to the ankyrin SOCS box (ASB) family. In terms of assembly, interacts with MAPRE2; this interaction promotes MAPRE2 degradation.

The protein operates within protein modification; protein ubiquitination. In terms of biological role, may be a substrate-recognition component of a SCF-like ECS (Elongin-Cullin-SOCS-box protein) E3 ubiquitin-protein ligase complex which mediates the ubiquitination and subsequent proteasomal degradation of target proteins. Plays a role in the inhibition of cardiomyocyte nuclear proliferation by mediating the ubiquitination and degradation of MAPRE2. This chain is Ankyrin repeat and SOCS box protein 14 (ASB14), found in Homo sapiens (Human).